The sequence spans 90 residues: Putative septation protein SpoVG (90 aa).

It belongs to the SpoVG family.

In terms of biological role, could be involved in septation. This is Putative septation protein SpoVG from Clostridium perfringens (strain SM101 / Type A).